The following is a 323-amino-acid chain: Glyoxylate/hydroxypyruvate reductase HPR3 (323 aa).

Residues 160 to 163 (LGSI), 182 to 184 (SRS), and 238 to 240 (VGR) contribute to the NADP(+) site. Residues Arg-240 and Glu-269 contribute to the active site. Catalysis depends on His-287, which acts as the Proton donor. Position 287-289 (287-289 (HFA)) interacts with NADP(+).

This sequence belongs to the D-isomer specific 2-hydroxyacid dehydrogenase family. GyaR subfamily. In terms of assembly, homodimer.

The enzyme catalyses glycolate + NADP(+) = glyoxylate + NADPH + H(+). The catalysed reaction is (R)-glycerate + NADP(+) = 3-hydroxypyruvate + NADPH + H(+). Its activity is regulated as follows. Inhibited by oxalate. Its function is as follows. Catalyzes the NADPH-dependent reduction of glyoxylate and hydroxypyruvate (HP) into glycolate and glycerate. Mostly active in the presence of NADPH and glyoxylate. This chain is Glyoxylate/hydroxypyruvate reductase HPR3 (HPR3), found in Arabidopsis thaliana (Mouse-ear cress).